A 1419-amino-acid polypeptide reads, in one-letter code: Agglutinin-like protein 5 (1419 aa).

Residues 1 to 17 (MIQQFTLLFLYLSFATA) form the signal peptide. Cystine bridges form between Cys73–Cys150, Cys96–Cys112, Cys205–Cys298, and Cys227–Cys256. 8 ALS repeats span residues 365–396 (TTITTSYVGVTTSYSTKTAPIGETATVIVDVP), 401–432 (TTVTSEWTGTITTTTTRTNPTDSIDTVVVQVP), 438–469 (TTTTQFWSESFTSTTTITNSLKGTDSVIVREP), 474–505 (VTTTEFWSESFATTETITSKPEGTDSVIVREP), 510–541 (VTTTEFWSESYATTETITNGPEGTDSVIVREP), 546–577 (VTTTKFWSESYATTETITNKPEGTDSVIVKEP), 582–613 (VTTTEFWSESYATTETITNGPEGTDSVIVREP), and 618–649 (VTTTEFWSESYATTETITTGPLGTDSIVIHDP). 2 disordered regions span residues 652-752 (ESSS…SSSS) and 864-885 (ASSFDSSSSLNSDSSSSPSSDQ). An N-linked (GlcNAc...) asparagine glycan is attached at Asn665. An N-linked (GlcNAc...) asparagine glycan is attached at Asn919. Disordered regions lie at residues 926–966 (SESE…DSST), 981–1035 (TGMP…TKSS), 1051–1093 (TSTL…KESS), 1134–1177 (EDNE…TTDV), and 1211–1252 (ATSL…NRLS). 3 stretches are compositionally biased toward low complexity: residues 928–942 (SESSSVASPSMASES), 951–966 (SESTDTTSSIGTDSST), and 993–1011 (TSDVTTTSSFVASSTPTSA). Polar residues predominate over residues 1012–1022 (EQSITDNPNID). 2 stretches are compositionally biased toward low complexity: residues 1023-1035 (SSQTSASSSTKSS) and 1051-1078 (TSTLSSDDSTSSDTSISSTTNSDTGNIN). Composition is skewed to polar residues over residues 1079–1093 (AGSSHTSTASIKESS) and 1138–1160 (PNTFTSTPSSHSEIFSSDNSVLS). The segment covering 1212–1230 (TSLRSTSSSSNHATESSGT) has biased composition (low complexity). N-linked (GlcNAc...) asparagine glycans are attached at residues Asn1301 and Asn1326. Ser1398 carries the GPI-anchor amidated serine lipid modification. Positions 1399–1419 (SATKHPSWLLKFISVALFFFL) are cleaved as a propeptide — removed in mature form.

This sequence belongs to the ALS family. Forms homodimers through the tandem repeats. Aggregates in amyloid-like structures, with self-propagating secondary-structure changes, amyloid-characteristic dye binding, and induced birefringence. In terms of processing, N-glycosylated and O-glycosylated. Post-translationally, the GPI-anchor is attached to the protein in the endoplasmic reticulum and serves to target the protein to the cell surface. There, the glucosamine-inositol phospholipid moiety is cleaved off and the GPI-modified mannoprotein is covalently attached via its lipidless GPI glycan remnant to the 1,6-beta-glucan of the outer cell wall layer.

Its subcellular location is the cell membrane. The protein localises to the secreted. It is found in the cell wall. Functionally, cell surface adhesion protein which mediates both yeast-to-host tissue adherence and yeast aggregation. Plays an important role in the pathogenesis of C.albicans infections. Forms amyloid structures, essential for cell-cell association and cell-substrate adhesion to polystyrene. This chain is Agglutinin-like protein 5 (ALS5), found in Candida albicans (Yeast).